Reading from the N-terminus, the 278-residue chain is Ribosomal RNA small subunit methyltransferase A (278 aa).

Residues Asn27, Leu29, Gly54, Glu75, Asp95, and Asn118 each contribute to the S-adenosyl-L-methionine site.

Belongs to the class I-like SAM-binding methyltransferase superfamily. rRNA adenine N(6)-methyltransferase family. RsmA subfamily.

It is found in the cytoplasm. The catalysed reaction is adenosine(1518)/adenosine(1519) in 16S rRNA + 4 S-adenosyl-L-methionine = N(6)-dimethyladenosine(1518)/N(6)-dimethyladenosine(1519) in 16S rRNA + 4 S-adenosyl-L-homocysteine + 4 H(+). Its function is as follows. Specifically dimethylates two adjacent adenosines (A1518 and A1519) in the loop of a conserved hairpin near the 3'-end of 16S rRNA in the 30S particle. May play a critical role in biogenesis of 30S subunits. The chain is Ribosomal RNA small subunit methyltransferase A from Chlamydia caviae (strain ATCC VR-813 / DSM 19441 / 03DC25 / GPIC) (Chlamydophila caviae).